We begin with the raw amino-acid sequence, 885 residues long: Alanine--tRNA ligase (885 aa).

His574, His578, Cys685, and His689 together coordinate Zn(2+).

The protein belongs to the class-II aminoacyl-tRNA synthetase family. The cofactor is Zn(2+).

The protein localises to the cytoplasm. It catalyses the reaction tRNA(Ala) + L-alanine + ATP = L-alanyl-tRNA(Ala) + AMP + diphosphate. In terms of biological role, catalyzes the attachment of alanine to tRNA(Ala) in a two-step reaction: alanine is first activated by ATP to form Ala-AMP and then transferred to the acceptor end of tRNA(Ala). Also edits incorrectly charged Ser-tRNA(Ala) and Gly-tRNA(Ala) via its editing domain. In Deinococcus geothermalis (strain DSM 11300 / CIP 105573 / AG-3a), this protein is Alanine--tRNA ligase.